Reading from the N-terminus, the 49-residue chain is Osteocalcin (49 aa).

Pyrrolidone carboxylic acid is present on glutamine 1. One can recognise a Gla domain in the interval 1 to 47 (QLINGQGAPAPYPDPLEPKREVCELNPDCDELADQVGLQDAYQRFYG). Proline 9 bears the 4-hydroxyproline mark. Residues glutamate 17, glutamate 21, glutamate 24, and aspartate 30 each coordinate Ca(2+). Residues glutamate 17, glutamate 21, and glutamate 24 each carry the 4-carboxyglutamate modification. Residues cysteine 23 and cysteine 29 are joined by a disulfide bond.

The protein belongs to the osteocalcin/matrix Gla protein family. Post-translationally, gamma-carboxyglutamate residues are formed by vitamin K dependent carboxylation by GGCX. These residues are essential for the binding of calcium. Decarboxylation promotes the hormone activity.

The protein resides in the secreted. Functionally, the carboxylated form is one of the main organic components of the bone matrix, which constitutes 1-2% of the total bone protein: it acts as a negative regulator of bone formation and is required to limit bone formation without impairing bone resorption or mineralization. The carboxylated form binds strongly to apatite and calcium. Its function is as follows. The uncarboxylated form acts as a hormone secreted by osteoblasts, which regulates different cellular processes, such as energy metabolism, male fertility and brain development. Regulates of energy metabolism by acting as a hormone favoring pancreatic beta-cell proliferation, insulin secretion and sensitivity and energy expenditure. Uncarboxylated osteocalcin hormone also promotes testosterone production in the testes: acts as a ligand for G protein-coupled receptor GPRC6A at the surface of Leydig cells, initiating a signaling response that promotes the expression of enzymes required for testosterone synthesis in a CREB-dependent manner. Also acts as a regulator of brain development: osteocalcin hormone crosses the blood-brain barrier and acts as a ligand for GPR158 on neurons, initiating a signaling response that prevents neuronal apoptosis in the hippocampus, favors the synthesis of all monoamine neurotransmitters and inhibits that of gamma-aminobutyric acid (GABA). Osteocalcin also crosses the placenta during pregnancy and maternal osteocalcin is required for fetal brain development. This Oryctolagus cuniculus (Rabbit) protein is Osteocalcin (BGLAP).